The primary structure comprises 149 residues: Nucleoside diphosphate kinase (149 aa).

6 residues coordinate ATP: K9, F57, R85, T91, R102, and N112. H115 (pros-phosphohistidine intermediate) is an active-site residue.

It belongs to the NDK family. Homotetramer. Mg(2+) serves as cofactor.

It localises to the cytoplasm. The enzyme catalyses a 2'-deoxyribonucleoside 5'-diphosphate + ATP = a 2'-deoxyribonucleoside 5'-triphosphate + ADP. It catalyses the reaction a ribonucleoside 5'-diphosphate + ATP = a ribonucleoside 5'-triphosphate + ADP. In terms of biological role, major role in the synthesis of nucleoside triphosphates other than ATP. The ATP gamma phosphate is transferred to the NDP beta phosphate via a ping-pong mechanism, using a phosphorylated active-site intermediate. This is Nucleoside diphosphate kinase from Microcystis aeruginosa (strain NIES-843 / IAM M-2473).